We begin with the raw amino-acid sequence, 78 residues long: Antimicrobial peptide marcin-18 (78 aa).

Positions 1 to 23 are cleaved as a signal peptide; it reads MQFKKQLMVIFLAYFLVVNESEA. Residue Arg-41 is modified to Arginine amide. Residues 42 to 78 constitute a propeptide that is removed on maturation; sequence RKNQRSRSIMKRDLENLFDPYQRNLELDRLLKQLPNY.

Belongs to the non-disulfide-bridged peptide (NDBP) superfamily. Medium-length antimicrobial peptide (group 3) family. Expressed by the venom gland.

The protein resides in the secreted. It is found in the target cell membrane. Functionally, antimicrobial peptide with potent activity against bacteria. Acts by fastly disrupting the bacterial membrane. Shows activity against Gram-positive bacteria S.aureus (MIC=1.5-2.9 uM) and S.epidermidis (MIC=2.9 uM), M.luteus (MIC=23.4 uM), B.thuringiensis (MIC=2.9 uM), B.subtilis (MIC=2.9 uM) and Gram-negative bacteria E.coli (MIC=5.9-11.7 uM) and P.aeruginosa (MIC=5.9 uM), as well as against penicillin (MIC=2.9 uM) and methicillin (MIC=1.5-2.9 uM) resistant bacteria. Antibiotic activity is not affected by major negatively charged components of the prokaryotic cell wall (e.g. lipopolysaccharides and lipoteichoic acid). In vivo, in a mouse model of lethal peritonitis, shows potent antibiotic activity without cytotoxicity, improving the survival rate. This is Antimicrobial peptide marcin-18 from Olivierus martensii (Manchurian scorpion).